We begin with the raw amino-acid sequence, 178 residues long: Protein GrpE (178 aa).

Positions 1–11 (MAEDQAPREET) are enriched in basic and acidic residues. Residues 1-30 (MAEDQAPREETVEAPELTEAPEIDELETLR) are disordered.

It belongs to the GrpE family. As to quaternary structure, homodimer.

Its subcellular location is the cytoplasm. Functionally, participates actively in the response to hyperosmotic and heat shock by preventing the aggregation of stress-denatured proteins, in association with DnaK and GrpE. It is the nucleotide exchange factor for DnaK and may function as a thermosensor. Unfolded proteins bind initially to DnaJ; upon interaction with the DnaJ-bound protein, DnaK hydrolyzes its bound ATP, resulting in the formation of a stable complex. GrpE releases ADP from DnaK; ATP binding to DnaK triggers the release of the substrate protein, thus completing the reaction cycle. Several rounds of ATP-dependent interactions between DnaJ, DnaK and GrpE are required for fully efficient folding. In Cereibacter sphaeroides (strain ATCC 17023 / DSM 158 / JCM 6121 / CCUG 31486 / LMG 2827 / NBRC 12203 / NCIMB 8253 / ATH 2.4.1.) (Rhodobacter sphaeroides), this protein is Protein GrpE.